Reading from the N-terminus, the 211-residue chain is ATP phosphoribosyltransferase (211 aa).

Belongs to the ATP phosphoribosyltransferase family. Short subfamily. Heteromultimer composed of HisG and HisZ subunits.

It is found in the cytoplasm. The catalysed reaction is 1-(5-phospho-beta-D-ribosyl)-ATP + diphosphate = 5-phospho-alpha-D-ribose 1-diphosphate + ATP. It functions in the pathway amino-acid biosynthesis; L-histidine biosynthesis; L-histidine from 5-phospho-alpha-D-ribose 1-diphosphate: step 1/9. In terms of biological role, catalyzes the condensation of ATP and 5-phosphoribose 1-diphosphate to form N'-(5'-phosphoribosyl)-ATP (PR-ATP). Has a crucial role in the pathway because the rate of histidine biosynthesis seems to be controlled primarily by regulation of HisG enzymatic activity. The chain is ATP phosphoribosyltransferase from Pseudomonas putida (strain GB-1).